Here is a 160-residue protein sequence, read N- to C-terminus: Ribonuclease HI (160 aa).

In terms of domain architecture, RNase H type-1 spans 4–147 (TPNSVTLYTD…CDRLAVAAYQ (144 aa)). Asp-13, Glu-52, Asp-74, and Asp-139 together coordinate Mg(2+).

The protein belongs to the RNase H family. Monomer. Mg(2+) serves as cofactor.

It is found in the cytoplasm. The enzyme catalyses Endonucleolytic cleavage to 5'-phosphomonoester.. Endonuclease that specifically degrades the RNA of RNA-DNA hybrids. The chain is Ribonuclease HI (rnhA) from Synechocystis sp. (strain ATCC 27184 / PCC 6803 / Kazusa).